The chain runs to 307 residues: Pollen allergen KBG 60 (307 aa).

A signal peptide spans 1-22 (MAVQKYTVALFLVALVVGPAAS).

The protein belongs to the Poa p IX/Phl p VI allergen family. In terms of tissue distribution, pollen.

This Poa pratensis (Kentucky bluegrass) protein is Pollen allergen KBG 60.